Reading from the N-terminus, the 425-residue chain is MHKILVRSNYKPLVGQIKINGSKNAILPIMAASLLSSSSVVLHNVPDLIDVHLMSELLEGLGAKVNFMHNKDHKANHTLETDCSNINNYAIQYETASKLRASFLMLGPMLSRFGKARTAFPGGCNIGKRPVDMHIKALEEMGAKIEIDGYNIIATVKGKLQGRKITLEKISVGATENIIMAATLAEGVTTINNAATEPEILDLIEFLKKIGADIKINNTKVIITGVKKLNGCIHKIISDRIEAGTYALAAIITNGKLVLEGINLSDIRCIANELEAIGAMVELYDGSIVISRKNGSIKSTNVATDPYPNFPSDMQPQLMSAMCIADGISVIEENIFENRFSHADELRKLGANISIKKNKAAINGIKSLSGANLYATDLRSTAALVLASLVASGETTINNSHHLWRGYEAMHEKLNSCGADISISP.

23–24 (KN) contributes to the phosphoenolpyruvate binding site. Position 100 (Arg100) interacts with UDP-N-acetyl-alpha-D-glucosamine. The active-site Proton donor is Cys124. A 2-(S-cysteinyl)pyruvic acid O-phosphothioketal modification is found at Cys124. Residues Asp313 and Ile335 each coordinate UDP-N-acetyl-alpha-D-glucosamine.

It belongs to the EPSP synthase family. MurA subfamily.

It is found in the cytoplasm. It carries out the reaction phosphoenolpyruvate + UDP-N-acetyl-alpha-D-glucosamine = UDP-N-acetyl-3-O-(1-carboxyvinyl)-alpha-D-glucosamine + phosphate. Its pathway is cell wall biogenesis; peptidoglycan biosynthesis. Its function is as follows. Cell wall formation. Adds enolpyruvyl to UDP-N-acetylglucosamine. The protein is UDP-N-acetylglucosamine 1-carboxyvinyltransferase of Wolbachia sp. subsp. Brugia malayi (strain TRS).